The chain runs to 188 residues: Molybdopterin synthase catalytic subunit (188 aa).

The residue at position 20 (S20) is a Phosphoserine. Residues H143 to R144, K159, and K166 to E168 contribute to the substrate site.

Belongs to the MoaE family. MOCS2B subfamily. As to quaternary structure, heterotetramer; composed of 2 small (MOCS2A) and 2 large (MOCS2B) subunits. In terms of tissue distribution, highest levels are found in heart and skeletal muscle. Lower levels are present in brain, kidney and pancreas. Very low levels are found in lung and peripheral blood leukocytes.

The protein localises to the cytoplasm. The protein resides in the cytosol. It catalyses the reaction 2 [molybdopterin-synthase sulfur-carrier protein]-C-terminal-Gly-aminoethanethioate + cyclic pyranopterin phosphate + H2O = molybdopterin + 2 [molybdopterin-synthase sulfur-carrier protein]-C-terminal Gly-Gly + 2 H(+). The protein operates within cofactor biosynthesis; molybdopterin biosynthesis. Its function is as follows. Catalytic subunit of the molybdopterin synthase complex, a complex that catalyzes the conversion of precursor Z into molybdopterin. Acts by mediating the incorporation of 2 sulfur atoms from thiocarboxylated MOCS2A into precursor Z to generate a dithiolene group. This Homo sapiens (Human) protein is Molybdopterin synthase catalytic subunit.